Reading from the N-terminus, the 365-residue chain is Peptide chain release factor 2 (365 aa).

The residue at position 252 (Gln-252) is an N5-methylglutamine.

It belongs to the prokaryotic/mitochondrial release factor family. Methylated by PrmC. Methylation increases the termination efficiency of RF2.

The protein resides in the cytoplasm. Functionally, peptide chain release factor 2 directs the termination of translation in response to the peptide chain termination codons UGA and UAA. The protein is Peptide chain release factor 2 of Shigella flexneri.